We begin with the raw amino-acid sequence, 457 residues long: MLQRNFHIITFGCQMNTNDSFWLSCSLQKKGFQEVSLEDASIIIINTCSVREKPEQKVYSILGKIRHATKNNPDSFVVIAGCVAQQLGATFFEKFPQVRLVSGSDGIAMAPDAIERLYAEPDLKLNLTDFSEYYPEREYAFSKLTLSNNNTLALMAYVNIMQGCDNYCTYCIVPYTRGKQKSRSVQAIVEECQQLIDSGVKEIVLLGQNVNAYGLDKDKNSPANGVNFAMLVHTIASLPGLERLRFFSAHPKEFSSELIDLFGEFSTLCPRLHLPLQSGSDKILRRMGRKYSMDEYISIITKLKKVRPDIALSTDFIVGFPGETEEDFLQTLQSINTIKFMSSFSFCYSDRPGTRSSTFSNKVDHEVKIKRLEQLQATQLEHSTSWLKSRVGVETTVLLEKVSRKKAEDNNSWQGRDPWGNVVNVILPQSTNISNTLLPVRIIASKKHSLVAEPLII.

Residues 4–119 enclose the MTTase N-terminal domain; the sequence is RNFHIITFGC…APDAIERLYA (116 aa). [4Fe-4S] cluster contacts are provided by C13, C48, C82, C164, C168, and C171. Residues 150–385 enclose the Radical SAM core domain; sequence NTLALMAYVN…QATQLEHSTS (236 aa). The TRAM domain maps to 388-456; the sequence is KSRVGVETTV…KHSLVAEPLI (69 aa).

The protein belongs to the methylthiotransferase family. MiaB subfamily. In terms of assembly, monomer. Requires [4Fe-4S] cluster as cofactor.

The protein localises to the cytoplasm. It catalyses the reaction N(6)-dimethylallyladenosine(37) in tRNA + (sulfur carrier)-SH + AH2 + 2 S-adenosyl-L-methionine = 2-methylsulfanyl-N(6)-dimethylallyladenosine(37) in tRNA + (sulfur carrier)-H + 5'-deoxyadenosine + L-methionine + A + S-adenosyl-L-homocysteine + 2 H(+). Its function is as follows. Catalyzes the methylthiolation of N6-(dimethylallyl)adenosine (i(6)A), leading to the formation of 2-methylthio-N6-(dimethylallyl)adenosine (ms(2)i(6)A) at position 37 in tRNAs that read codons beginning with uridine. The polypeptide is tRNA-2-methylthio-N(6)-dimethylallyladenosine synthase (Lawsonia intracellularis (strain PHE/MN1-00)).